A 353-amino-acid chain; its full sequence is UPF0283 membrane protein YcjF (353 aa).

The next 3 membrane-spanning stretches (helical) occupy residues 70–90 (MVMG…VQWT), 100–120 (VALG…GSVV), and 213–233 (ESTL…FIAW).

The protein belongs to the UPF0283 family.

The protein localises to the cell inner membrane. This Escherichia coli O7:K1 (strain IAI39 / ExPEC) protein is UPF0283 membrane protein YcjF.